We begin with the raw amino-acid sequence, 1092 residues long: Probable cellulose synthase A catalytic subunit 5 [UDP-forming] (1092 aa).

At 1–279 (MEASAGLVAG…SSSLVNPYRM (279 aa)) the chain is on the cytoplasmic side. The Zn(2+) site is built by Cys-39, Cys-42, Cys-58, Cys-61, Cys-66, Cys-69, Cys-81, and Cys-84. The RING-type; degenerate zinc finger occupies 39–85 (CQICGDDVGLTPDGEPFVACNECAFPVCRDCYEYERREGTQNCPQCK). A helical transmembrane segment spans residues 280-300 (IIIIRLVVLGFFFHYRVMHPV). Over 301–302 (PD) the chain is Extracellular. Residues 303-323 (AFALWLISVICEIWFAMSWIL) form a helical membrane-spanning segment. The Cytoplasmic portion of the chain corresponds to 324–868 (DQFPKWFPIE…CLERFSYINS (545 aa)). Residues Ser-362, Lys-368, Glu-369, and Asp-398 each coordinate UDP-alpha-D-glucose. The active site involves Asp-398. A coiled-coil region spans residues 450 to 479 (NFVRERRAMKREYEEFKVRINALVAKAQKV). UDP-alpha-D-glucose is bound at residue Lys-539. Mn(2+)-binding residues include Lys-540 and Asp-564. The active site involves Asp-792. A helical membrane pass occupies residues 869 to 889 (IVYPWTSIPLLAYCTLPAICL). Residues 890–901 (LTGKFITPELTN) are Extracellular-facing. Residues 902–922 (IASLWFMSLFICIFATGILEM) traverse the membrane as a helical segment. Over 923 to 938 (RWSGVGIDDWWRNEQF) the chain is Cytoplasmic. The helical transmembrane segment at 939–959 (WVIGGVSSHLFAVFQGLLKVI) threads the bilayer. Topologically, residues 960–987 (AGIDTSFTVTSKGGDDEEFSELYTFKWT) are extracellular. The helical transmembrane segment at 988 to 1008 (TLLIPPTTLLLLNFIGVVAGV) threads the bilayer. The Cytoplasmic segment spans residues 1009 to 1019 (SNAINNGYESW). Residues 1020–1040 (GPLFGKLFFAFWVIVHLYPFL) traverse the membrane as a helical segment. The Extracellular segment spans residues 1041–1049 (KGLVGRQNR). A helical membrane pass occupies residues 1050-1070 (TPTIVIVWSILLASIFSLLWV). Residues 1071–1092 (RIDPFLAKNDGPLLEECGLDCN) lie on the Cytoplasmic side of the membrane.

It belongs to the glycosyltransferase 2 family. Plant cellulose synthase subfamily. Mn(2+) is required as a cofactor. Zn(2+) serves as cofactor.

It is found in the cell membrane. It catalyses the reaction [(1-&gt;4)-beta-D-glucosyl](n) + UDP-alpha-D-glucose = [(1-&gt;4)-beta-D-glucosyl](n+1) + UDP + H(+). Its pathway is glycan metabolism; plant cellulose biosynthesis. Probable catalytic subunit of cellulose synthase terminal complexes ('rosettes'), required for beta-1,4-glucan microfibril crystallization, a major mechanism of the cell wall formation. This is Probable cellulose synthase A catalytic subunit 5 [UDP-forming] (CESA5) from Oryza sativa subsp. indica (Rice).